The primary structure comprises 255 residues: 5-oxoprolinase subunit A 1 (255 aa).

The protein belongs to the LamB/PxpA family. As to quaternary structure, forms a complex composed of PxpA, PxpB and PxpC.

The enzyme catalyses 5-oxo-L-proline + ATP + 2 H2O = L-glutamate + ADP + phosphate + H(+). Catalyzes the cleavage of 5-oxoproline to form L-glutamate coupled to the hydrolysis of ATP to ADP and inorganic phosphate. The chain is 5-oxoprolinase subunit A 1 from Bradyrhizobium diazoefficiens (strain JCM 10833 / BCRC 13528 / IAM 13628 / NBRC 14792 / USDA 110).